Reading from the N-terminus, the 424-residue chain is D-inositol 3-phosphate glycosyltransferase (424 aa).

His-21 is a binding site for 1D-myo-inositol 3-phosphate. Residues 27–28 and Gly-35 each bind UDP-N-acetyl-alpha-D-glucosamine; that span reads QP. 1D-myo-inositol 3-phosphate contacts are provided by residues 32–37, Lys-90, Tyr-123, Thr-147, and Arg-167; that span reads DAGGMN. Residues Arg-241, Lys-246, and Gln-299 each contribute to the UDP-N-acetyl-alpha-D-glucosamine site. 3 residues coordinate Mg(2+): Phe-308, Gln-309, and Ala-311. Residues Glu-321 and Glu-329 each coordinate UDP-N-acetyl-alpha-D-glucosamine. Thr-335 contributes to the Mg(2+) binding site.

The protein belongs to the glycosyltransferase group 1 family. MshA subfamily. Homodimer.

The enzyme catalyses 1D-myo-inositol 3-phosphate + UDP-N-acetyl-alpha-D-glucosamine = 1D-myo-inositol 2-acetamido-2-deoxy-alpha-D-glucopyranoside 3-phosphate + UDP + H(+). In terms of biological role, catalyzes the transfer of a N-acetyl-glucosamine moiety to 1D-myo-inositol 3-phosphate to produce 1D-myo-inositol 2-acetamido-2-deoxy-glucopyranoside 3-phosphate in the mycothiol biosynthesis pathway. The polypeptide is D-inositol 3-phosphate glycosyltransferase (Mycobacterium avium (strain 104)).